We begin with the raw amino-acid sequence, 245 residues long: Triosephosphate isomerase (245 aa).

Residue 9–11 (NWK) participates in substrate binding. H92 functions as the Electrophile in the catalytic mechanism. The active-site Proton acceptor is E164. Substrate is bound by residues G170, S209, and 230–231 (GG).

Belongs to the triosephosphate isomerase family. As to quaternary structure, homodimer.

It localises to the cytoplasm. The catalysed reaction is D-glyceraldehyde 3-phosphate = dihydroxyacetone phosphate. The protein operates within carbohydrate biosynthesis; gluconeogenesis. It functions in the pathway carbohydrate degradation; glycolysis; D-glyceraldehyde 3-phosphate from glycerone phosphate: step 1/1. Functionally, involved in the gluconeogenesis. Catalyzes stereospecifically the conversion of dihydroxyacetone phosphate (DHAP) to D-glyceraldehyde-3-phosphate (G3P). This Cupriavidus pinatubonensis (strain JMP 134 / LMG 1197) (Cupriavidus necator (strain JMP 134)) protein is Triosephosphate isomerase.